Reading from the N-terminus, the 218-residue chain is Deoxyribose-phosphate aldolase (218 aa).

The active-site Proton donor/acceptor is the Asp92. Lys155 acts as the Schiff-base intermediate with acetaldehyde in catalysis. The active-site Proton donor/acceptor is Lys184.

Belongs to the DeoC/FbaB aldolase family. DeoC type 1 subfamily.

Its subcellular location is the cytoplasm. It catalyses the reaction 2-deoxy-D-ribose 5-phosphate = D-glyceraldehyde 3-phosphate + acetaldehyde. It participates in carbohydrate degradation; 2-deoxy-D-ribose 1-phosphate degradation; D-glyceraldehyde 3-phosphate and acetaldehyde from 2-deoxy-alpha-D-ribose 1-phosphate: step 2/2. Catalyzes a reversible aldol reaction between acetaldehyde and D-glyceraldehyde 3-phosphate to generate 2-deoxy-D-ribose 5-phosphate. This Clostridium kluyveri (strain NBRC 12016) protein is Deoxyribose-phosphate aldolase.